A 457-amino-acid chain; its full sequence is Phosphoglucosamine mutase (457 aa).

The Phosphoserine intermediate role is filled by Ser-109. Ser-109, Asp-251, Asp-253, and Asp-255 together coordinate Mg(2+). The residue at position 109 (Ser-109) is a Phosphoserine.

This sequence belongs to the phosphohexose mutase family. Mg(2+) is required as a cofactor. Post-translationally, activated by phosphorylation.

It catalyses the reaction alpha-D-glucosamine 1-phosphate = D-glucosamine 6-phosphate. In terms of biological role, catalyzes the conversion of glucosamine-6-phosphate to glucosamine-1-phosphate. This chain is Phosphoglucosamine mutase, found in Bdellovibrio bacteriovorus (strain ATCC 15356 / DSM 50701 / NCIMB 9529 / HD100).